The sequence spans 84 residues: U8-theraphotoxin-Hhn1d (84 aa).

The signal sequence occupies residues methionine 1–cysteine 21. 5 cysteine pairs are disulfide-bonded: cysteine 23–cysteine 35, cysteine 29–cysteine 44, cysteine 34–cysteine 67, cysteine 54–cysteine 75, and cysteine 69–cysteine 81.

The protein belongs to the AVIT (prokineticin) family. Expressed by the venom gland.

It localises to the secreted. In Cyriopagopus hainanus (Chinese bird spider), this protein is U8-theraphotoxin-Hhn1d.